Reading from the N-terminus, the 462-residue chain is Retinoic acid receptor alpha (462 aa).

The interval Met1–Pro87 is modulating. Residues Gly52–Gln64 show a composition bias toward polar residues. The segment at Gly52 to Ser77 is disordered. Position 77 is a phosphoserine; by CDK7 (Ser77). 2 consecutive NR C4-type zinc fingers follow at residues Cys88–Cys108 and Cys124–Cys148. A DNA-binding region (nuclear receptor) is located at residues Cys88–Met153. Ser96 bears the Phosphoserine; by PKB/AKT1 mark. A hinge region spans residues Ser154–Pro182. Residues Lys166 and Lys171 each participate in a glycyl lysine isopeptide (Lys-Gly) (interchain with G-Cter in SUMO) cross-link. One can recognise an NR LBD domain in the interval Glu183 to Ser417. Ser219 carries the post-translational modification Phosphoserine; by PKA. An all-trans-retinoate-binding site is contributed by Cys235. The UBR5-degron motif lies at Ile254 to Ile258. All-trans-retinoate is bound at residue Ser287. The residue at position 369 (Ser369) is a Phosphoserine; by PKA. A Glycyl lysine isopeptide (Lys-Gly) (interchain with G-Cter in SUMO) cross-link involves residue Lys399. The tract at residues Gly404 to Gly419 is required for binding corepressor NCOR1. Residues Pro408–Asn416 carry the 9aaTAD motif. Residues Gly419–Pro462 are disordered. Over residues Gln426–Leu437 the composition is skewed to gly residues. A compositionally biased stretch (low complexity) spans Cys444–Pro462.

This sequence belongs to the nuclear hormone receptor family. NR1 subfamily. Heterodimer; with RXRA (via C-terminus); association with RXRA is enhanced by pulsatile shear stress. Binds DNA preferentially as a heterodimer. RXRA serves as enhancer to induce RARA binding to RARE. Interacts with RXRG. Interacts with coactivators NCOA3 and NCOA6. Interacts with NCOA7; the interaction requires ligand-binding. Interacts (via the ligand-binding domain) with PRAME; the interaction is ligand (retinoic acid)-dependent. Interacts with AKT1; the interaction phosphorylates RARA and represses transactivation. Interacts with PRKAR1A; the interaction negatively regulates RARA transcriptional activity. Interacts with NCOR1 and NCOR2. Interacts with PRMT2. Interacts with LRIF1. Interacts with ASXL1 and NCOA1. Interacts with ACTN4. In a complex with HDAC3, HDAC5 and HDAC7; the HDACs serve as corepressors of RARA, causing its deacetylation and inhibition of RARE DNA element binding; association with HDAC3, HDAC5 and HDAC7 is increased upon oscillatory shear stress. Interacts with CDK7. In the absence of hormonal ligand, interacts with TACC1. In terms of processing, phosphorylated on serine and threonine residues. Phosphorylation does not change during cell cycle. Phosphorylation on Ser-77 is crucial for transcriptional activity. Phosphorylation by AKT1 is required for the repressor activity but has no effect on DNA binding, protein stability nor subcellular localization. Phosphorylated by PKA in vitro. This phosphorylation on Ser-219 and Ser-369 is critical for ligand binding, nuclear localization and transcriptional activity in response to FSH signaling. Sumoylated with SUMO2, mainly on Lys-399 which is also required for SENP6 binding. On all-trans retinoic acid (ATRA) binding, a conformational change may occur that allows sumoylation on two additional site, Lys-166 and Lys-171. Probably desumoylated by SENP6. Sumoylation levels determine nuclear localization and regulate ATRA-mediated transcriptional activity. Post-translationally, trimethylation enhances heterodimerization with RXRA and positively modulates the transcriptional activation. In terms of processing, ubiquitinated by UBR5, leading to its degradation: UBR5 specifically recognizes and binds ligand-bound RARA when it is not associated with coactivators (NCOAs). In presence of NCOAs, the UBR5-degron is not accessible, preventing its ubiquitination and degradation. Acetylated; acetylation is increased upon pulsatile shear stress and decreased upon oscillatory shear stress. In terms of tissue distribution, expressed in monocytes.

The protein resides in the nucleus. The protein localises to the cytoplasm. In terms of biological role, receptor for retinoic acid. Retinoic acid receptors bind as heterodimers to their target response elements in response to their ligands, all-trans or 9-cis retinoic acid, and regulate gene expression in various biological processes. The RXR/RAR heterodimers bind to the retinoic acid response elements (RARE) composed of tandem 5'-AGGTCA-3' sites known as DR1-DR5. In the absence of ligand, the RXR-RAR heterodimers associate with a multiprotein complex containing transcription corepressors that induce histone deacetylation, chromatin condensation and transcriptional suppression. On ligand binding, the corepressors dissociate from the receptors and associate with the coactivators leading to transcriptional activation. Formation of a complex with histone deacetylases might lead to inhibition of RARE DNA element binding and to transcriptional repression. Transcriptional activation and RARE DNA element binding might be supported by the transcription factor KLF2. RARA plays an essential role in the regulation of retinoic acid-induced germ cell development during spermatogenesis. Has a role in the survival of early spermatocytes at the beginning prophase of meiosis. In Sertoli cells, may promote the survival and development of early meiotic prophase spermatocytes. In concert with RARG, required for skeletal growth, matrix homeostasis and growth plate function. Together with RXRA, positively regulates microRNA-10a expression, thereby inhibiting the GATA6/VCAM1 signaling response to pulsatile shear stress in vascular endothelial cells. In association with HDAC3, HDAC5 and HDAC7 corepressors, plays a role in the repression of microRNA-10a and thereby promotes the inflammatory response. This is Retinoic acid receptor alpha (RARA) from Homo sapiens (Human).